We begin with the raw amino-acid sequence, 228 residues long: DNA-3-methyladenine glycosylase 1 (228 aa).

The Proton acceptor role is filled by Asp-170.

It belongs to the alkylbase DNA glycosidase AlkA family.

It catalyses the reaction Hydrolysis of alkylated DNA, releasing 3-methyladenine, 3-methylguanine, 7-methylguanine and 7-methyladenine.. Its function is as follows. Hydrolysis of the deoxyribose N-glycosidic bond to excise 3-methyladenine or 7-methyladenine from the damaged DNA polymer formed by alkylation lesions. Can release ethylated and propylated bases from DNA in addition to 3-methyladenine. This Schizosaccharomyces pombe (strain 972 / ATCC 24843) (Fission yeast) protein is DNA-3-methyladenine glycosylase 1 (mag1).